Reading from the N-terminus, the 92-residue chain is MPKLEMMLLVLLILPLSYFSAAGGQVVQGDLRSDVLARYLQRGDRDARECQVNTPGSRWGKCCLNRMCGPMCCPESHCYCVYHRRRGHGCSC.

The signal sequence occupies residues 1–24; it reads MPKLEMMLLVLLILPLSYFSAAGG. Residues 25-45 constitute a propeptide that is removed on maturation; it reads QVVQGDLRSDVLARYLQRGDR. Glu-49 is subject to 4-carboxyglutamate. Pro-55 bears the 4-hydroxyproline mark. Intrachain disulfides connect Cys-63/Cys-72, Cys-68/Cys-80, Cys-73/Cys-90, and Cys-78/Cys-92.

It belongs to the conotoxin D superfamily. As to quaternary structure, hetero-, homo- or pseudo-homodimer (identical sequence, different post-translational modifications). Expressed by the venom duct.

It is found in the secreted. Its function is as follows. Alpha-conotoxins act on postsynaptic membranes, they bind to the nicotinic acetylcholine receptors (nAChR) and thus inhibit them. Through its two C-terminal domains, this homodimeric protein would bind to two nAChR allosteric sites, located outside the nAChR C-loop of the principal binding face and at the adjacent binding interface in a clockwise direction. This toxin specifically blocks mammalian neuronal nAChR of the alpha-7/CHRNA7, alpha-3-beta-2/CHRNA3-CHRNB2 and alpha-4-beta-2/CHRNA4-CHRNB2 subtypes. This chain is Alpha-conotoxin-like Rt20.1, found in Conus rattus (Rat cone).